The primary structure comprises 637 residues: Biosynthetic arginine decarboxylase (637 aa).

Lysine 101 bears the N6-(pyridoxal phosphate)lysine mark. Position 286 to 296 (286 to 296) interacts with substrate; the sequence is FDVGGGLAVDY.

The protein belongs to the Orn/Lys/Arg decarboxylase class-II family. SpeA subfamily. Mg(2+) serves as cofactor. It depends on pyridoxal 5'-phosphate as a cofactor.

The catalysed reaction is L-arginine + H(+) = agmatine + CO2. It functions in the pathway amine and polyamine biosynthesis; agmatine biosynthesis; agmatine from L-arginine: step 1/1. In terms of biological role, catalyzes the biosynthesis of agmatine from arginine. The polypeptide is Biosynthetic arginine decarboxylase (Shewanella sp. (strain MR-7)).